The chain runs to 347 residues: Phosphate acyltransferase (347 aa).

The protein belongs to the PlsX family. As to quaternary structure, homodimer. Probably interacts with PlsY.

The protein localises to the cytoplasm. The catalysed reaction is a fatty acyl-[ACP] + phosphate = an acyl phosphate + holo-[ACP]. The protein operates within lipid metabolism; phospholipid metabolism. Functionally, catalyzes the reversible formation of acyl-phosphate (acyl-PO(4)) from acyl-[acyl-carrier-protein] (acyl-ACP). This enzyme utilizes acyl-ACP as fatty acyl donor, but not acyl-CoA. In Anaplasma marginale (strain St. Maries), this protein is Phosphate acyltransferase.